The chain runs to 434 residues: O-phosphoseryl-tRNA(Sec) selenium transferase (434 aa).

Positions 1–40 are tetramerization; the sequence is MGLNITGLIPKHMENRGKLTLKENLKIIENILEQRKAPEN. Arg-71 is a binding site for pyridoxal 5'-phosphate. The phosphate loop (P-loop) stretch occupies residues 92 to 102; that stretch reads GRSGNLIDPQP. Positions 93, 94, and 101 each coordinate substrate. Position 277 is an N6-(pyridoxal phosphate)lysine (Lys-277). Residue Arg-306 coordinates substrate.

The protein belongs to the SepSecS family. In terms of assembly, homotetramer. Pyridoxal 5'-phosphate serves as cofactor.

The catalysed reaction is O-phospho-L-seryl-tRNA(Sec) + selenophosphate + H2O = L-selenocysteinyl-tRNA(Sec) + 2 phosphate. The protein operates within aminoacyl-tRNA biosynthesis; selenocysteinyl-tRNA(Sec) biosynthesis; selenocysteinyl-tRNA(Sec) from L-seryl-tRNA(Sec) (archaeal/eukaryal route): step 2/2. Functionally, converts O-phosphoseryl-tRNA(Sec) to selenocysteinyl-tRNA(Sec) required for selenoprotein biosynthesis. The chain is O-phosphoseryl-tRNA(Sec) selenium transferase (spcS) from Methanocaldococcus jannaschii (strain ATCC 43067 / DSM 2661 / JAL-1 / JCM 10045 / NBRC 100440) (Methanococcus jannaschii).